The sequence spans 486 residues: BTB/POZ domain and ankyrin repeat-containing protein NBCL (486 aa).

Positions Ser25–Pro115 constitute a BTB domain. The segment at Arg121 to Ser135 adopts a C2HC NPR-type zinc-finger fold. Residues Cys124, Cys129, His131, and Cys134 each coordinate Zn(2+). ANK repeat units lie at residues Gln257–Asp286, Glu287–Tyr316, Ala321–Val350, and Asp354–Leu388. Disordered stretches follow at residues Glu403–Asn441 and Gln464–Tyr486. Composition is skewed to low complexity over residues Asn406–Thr418 and Ser432–Asn441. A compositionally biased stretch (basic and acidic residues) spans Ser466–Asp475.

The protein belongs to the plant 'ANKYRIN-BTB/POZ' family. 'NOOT-BOP-COCH-like' (NBCL) subfamily. As to quaternary structure, homodimer.

It is found in the nucleus. The protein localises to the cytoplasm. It localises to the cell membrane. Its pathway is protein modification; protein ubiquitination. Functionally, may act as a substrate-specific adapter of an E3 ubiquitin-protein ligase complex (CUL3-RBX1-BTB) which mediates the ubiquitination and subsequent proteasomal degradation of target proteins. Transcriptional co-regulator involved in the promotion of leaf and floral meristem fate and determinacy. Necessary for the development of stipules at the base of petioles. Required for the abscission of senescent organs, probably by regulating the cell wall disorganization in abscission zones (AZs, e.g. pulvini at the base of leaves). Promotes slightly root-cap border cells separation from the root tip. Involved in the coordination of the symbiotic nodule developmental program; promotes the formation of root nodules by interacting directly with APP1 to modulate the expression of the nuclear transcription factor Y subunit (NF-YA1), a key nodulin. Necessary for the robust maintenance of nodule identity throughout the nodule developmental program. The polypeptide is BTB/POZ domain and ankyrin repeat-containing protein NBCL (Lupinus angustifolius (Narrow-leaved blue lupine)).